A 684-amino-acid chain; its full sequence is Chaperone protein HtpG (684 aa).

Positions 1 to 329 (MSKKGTIGVT…SPDIPLNVSR (329 aa)) are a; substrate-binding. The segment at 330-548 (SYLQSDANVK…FMRRMRDMAQ (219 aa)) is b. Positions 549-684 (LQPGMSFYGE…EFIRRSQRLL (136 aa)) are c.

Belongs to the heat shock protein 90 family. Homodimer.

The protein resides in the cytoplasm. Its function is as follows. Molecular chaperone. Has ATPase activity. The protein is Chaperone protein HtpG of Porphyromonas gingivalis (strain ATCC 33277 / DSM 20709 / CIP 103683 / JCM 12257 / NCTC 11834 / 2561).